The chain runs to 236 residues: Glucosamine-6-phosphate deaminase (236 aa).

The active-site Proton acceptor; for enolization step is Asp67. Asn136 serves as the catalytic For ring-opening step. His138 functions as the Proton acceptor; for ring-opening step in the catalytic mechanism. Glu143 serves as the catalytic For ring-opening step.

It belongs to the glucosamine/galactosamine-6-phosphate isomerase family. NagB subfamily.

It catalyses the reaction alpha-D-glucosamine 6-phosphate + H2O = beta-D-fructose 6-phosphate + NH4(+). The protein operates within amino-sugar metabolism; N-acetylneuraminate degradation; D-fructose 6-phosphate from N-acetylneuraminate: step 5/5. In terms of biological role, catalyzes the reversible isomerization-deamination of glucosamine 6-phosphate (GlcN6P) to form fructose 6-phosphate (Fru6P) and ammonium ion. The protein is Glucosamine-6-phosphate deaminase of Lachnoclostridium phytofermentans (strain ATCC 700394 / DSM 18823 / ISDg) (Clostridium phytofermentans).